Reading from the N-terminus, the 632-residue chain is MTQSTTSHYFVESPSTRALVLGAVGVVFGDIGTSPLYALKECFSKEHGIMFSPEAVLGVISMLFWAMIIVVSIKYVVFVMRADNDGEGGVLALMALVLRTVAPRSGRARVLMMLGIFGACMFYGDAVITPAISVLSAVEGLEIAAPQLSQFVIPITLMILAALFLIQRHGTATMGKLFGPIMTAWFLALGGLGILHLVQAPEILKAINPYYAITFLVEHALQAFIVLGSVFLVLTGAEALYVDMGHFGARPIRIGWFVLVMPCLMLNYFGQGAMLLHNPAGAENPFYLMVPDLLQIPMVLLATCATVIASQAVISGAFSLTSQAIQLGFLPRMRVRYTSAAEIGQIYLPVINWLLLVLVIGVVISFKKSENLAAAYGIAVTTTMVITTILAAVCMRSVWKWNPALVAVVGLAFIVVDLSFFAANLLKVAEGGWFPLLLGSAAFFLLMTWYSGRKLLRARSLEDGIPLEPFIAGLLAHPPHRVEGTAVFLTGNTESVPVSLLHNLKHNRVLHERVVFLTFVTRDIPYVDDDHRLSCKDVGGGVFILKSEYGFKETPDVQRVLDLADRKLGMHFELMETSFFIARESVIPSKLPGMPMWRESLFAWMHQNGAKPSDFFQIPANRVVELGTKVEI.

Helical transmembrane passes span 19–39 (LVLGAVGVVFGDIGTSPLYAL), 59–79 (VISMLFWAMIIVVSIKYVVFV), 110–130 (VLMMLGIFGACMFYGDAVITP), 146–166 (PQLSQFVIPITLMILAALFLI), 178–198 (FGPIMTAWFLALGGLGILHLV), 213–233 (ITFLVEHALQAFIVLGSVFLV), 256–276 (WFVLVMPCLMLNYFGQGAMLL), 298–318 (MVLLATCATVIASQAVISGAF), 346–366 (IYLPVINWLLLVLVIGVVISF), 373–393 (AAAYGIAVTTTMVITTILAAV), 403–423 (PALVAVVGLAFIVVDLSFFAA), and 428–448 (VAEGGWFPLLLGSAAFFLLMT).

This sequence belongs to the HAK/KUP transporter (TC 2.A.72) family.

The protein localises to the cell inner membrane. It catalyses the reaction K(+)(in) + H(+)(in) = K(+)(out) + H(+)(out). Functionally, transport of potassium into the cell. Likely operates as a K(+):H(+) symporter. The polypeptide is Probable potassium transport system protein Kup 1 (Cupriavidus necator (strain ATCC 17699 / DSM 428 / KCTC 22496 / NCIMB 10442 / H16 / Stanier 337) (Ralstonia eutropha)).